The chain runs to 261 residues: Indole-3-glycerol phosphate synthase (261 aa).

Belongs to the TrpC family.

The enzyme catalyses 1-(2-carboxyphenylamino)-1-deoxy-D-ribulose 5-phosphate + H(+) = (1S,2R)-1-C-(indol-3-yl)glycerol 3-phosphate + CO2 + H2O. It participates in amino-acid biosynthesis; L-tryptophan biosynthesis; L-tryptophan from chorismate: step 4/5. The sequence is that of Indole-3-glycerol phosphate synthase from Burkholderia thailandensis (strain ATCC 700388 / DSM 13276 / CCUG 48851 / CIP 106301 / E264).